Here is a 537-residue protein sequence, read N- to C-terminus: Phosphoenolpyruvate carboxykinase (ATP) (537 aa).

R61, Y195, and K201 together coordinate substrate. Residues K201, H220, and 236 to 244 (GLSGTGKTT) contribute to the ATP site. Mn(2+) contacts are provided by K201 and H220. D257 contacts Mn(2+). Positions 285, 323, and 448 each coordinate ATP. R323 contributes to the substrate binding site.

It belongs to the phosphoenolpyruvate carboxykinase (ATP) family. It depends on Mn(2+) as a cofactor.

It is found in the cytoplasm. The enzyme catalyses oxaloacetate + ATP = phosphoenolpyruvate + ADP + CO2. It functions in the pathway carbohydrate biosynthesis; gluconeogenesis. Functionally, involved in the gluconeogenesis. Catalyzes the conversion of oxaloacetate (OAA) to phosphoenolpyruvate (PEP) through direct phosphoryl transfer between the nucleoside triphosphate and OAA. This chain is Phosphoenolpyruvate carboxykinase (ATP), found in Azorhizobium caulinodans (strain ATCC 43989 / DSM 5975 / JCM 20966 / LMG 6465 / NBRC 14845 / NCIMB 13405 / ORS 571).